A 414-amino-acid chain; its full sequence is DNA primase large subunit PriL (414 aa).

Cys251, Cys352, Cys370, and Cys376 together coordinate [4Fe-4S] cluster.

This sequence belongs to the eukaryotic-type primase large subunit family. In terms of assembly, heterodimer of a small subunit (PriS) and a large subunit (PriL). It depends on [4Fe-4S] cluster as a cofactor.

Functionally, regulatory subunit of DNA primase, an RNA polymerase that catalyzes the synthesis of short RNA molecules used as primers for DNA polymerase during DNA replication. Stabilizes and modulates the activity of the small subunit, increasing the rate of DNA synthesis, and conferring RNA synthesis capability. The DNA polymerase activity may enable DNA primase to also catalyze primer extension after primer synthesis. May also play a role in DNA repair. The polypeptide is DNA primase large subunit PriL (Methanocaldococcus jannaschii (strain ATCC 43067 / DSM 2661 / JAL-1 / JCM 10045 / NBRC 100440) (Methanococcus jannaschii)).